A 25-amino-acid polypeptide reads, in one-letter code: Pancreatic triacylglycerol lipase (25 aa).

Cysteines 4 and 10 form a disulfide.

It belongs to the AB hydrolase superfamily. Lipase family. As to quaternary structure, forms a 1:1 stoichiometric complex with (pro)colipase/CLPS.

It is found in the secreted. The enzyme catalyses a triacylglycerol + H2O = a diacylglycerol + a fatty acid + H(+). It carries out the reaction 1,2,3-tributanoylglycerol + H2O = dibutanoylglycerol + butanoate + H(+). The catalysed reaction is 1,2,3-tri-(9Z-octadecenoyl)-glycerol + H2O = di-(9Z)-octadecenoylglycerol + (9Z)-octadecenoate + H(+). It catalyses the reaction all-trans-retinyl hexadecanoate + H2O = all-trans-retinol + hexadecanoate + H(+). The enzyme catalyses 1,2-di-(9Z-octadecenoyl)-glycerol + H2O = (9Z-octadecenoyl)-glycerol + (9Z)-octadecenoate + H(+). Its activity is regulated as follows. Inhibited by bile salts, is reactivated by (pro)colipase/CLPS. Plays an important role in fat metabolism. It preferentially splits the esters of long-chain fatty acids at positions 1 and 3, producing mainly 2-monoacylglycerol and free fatty acids, and shows considerably higher activity against insoluble emulsified substrates than against soluble ones. This Felis catus (Cat) protein is Pancreatic triacylglycerol lipase (PNLIP).